The primary structure comprises 292 residues: Acetyl-coenzyme A carboxylase carboxyl transferase subunit beta (292 aa).

The CoA carboxyltransferase N-terminal domain occupies 36 to 292 (MWSKCEKCAK…LLRMHEVDYE (257 aa)). Positions 40, 43, 59, and 62 each coordinate Zn(2+). Residues 40 to 62 (CEKCAKILYTEDLRENFNVCPNC) form a C4-type zinc finger.

Belongs to the AccD/PCCB family. In terms of assembly, acetyl-CoA carboxylase is a heterohexamer composed of biotin carboxyl carrier protein (AccB), biotin carboxylase (AccC) and two subunits each of ACCase subunit alpha (AccA) and ACCase subunit beta (AccD). Zn(2+) serves as cofactor.

Its subcellular location is the cytoplasm. It carries out the reaction N(6)-carboxybiotinyl-L-lysyl-[protein] + acetyl-CoA = N(6)-biotinyl-L-lysyl-[protein] + malonyl-CoA. It functions in the pathway lipid metabolism; malonyl-CoA biosynthesis; malonyl-CoA from acetyl-CoA: step 1/1. Its function is as follows. Component of the acetyl coenzyme A carboxylase (ACC) complex. Biotin carboxylase (BC) catalyzes the carboxylation of biotin on its carrier protein (BCCP) and then the CO(2) group is transferred by the transcarboxylase to acetyl-CoA to form malonyl-CoA. This chain is Acetyl-coenzyme A carboxylase carboxyl transferase subunit beta, found in Clostridium perfringens (strain 13 / Type A).